Here is a 201-residue protein sequence, read N- to C-terminus: Large ribosomal subunit protein uL4 (201 aa).

The interval 43–71 (TRAQKTRSEVSGGGKKPWAQKGTGRARAG) is disordered.

Belongs to the universal ribosomal protein uL4 family. Part of the 50S ribosomal subunit.

Functionally, one of the primary rRNA binding proteins, this protein initially binds near the 5'-end of the 23S rRNA. It is important during the early stages of 50S assembly. It makes multiple contacts with different domains of the 23S rRNA in the assembled 50S subunit and ribosome. Its function is as follows. Forms part of the polypeptide exit tunnel. The polypeptide is Large ribosomal subunit protein uL4 (Pseudoalteromonas translucida (strain TAC 125)).